Reading from the N-terminus, the 1140-residue chain is Eukaryotic translation initiation factor 3 subunit A (1140 aa).

Residues Leu-319–Thr-502 form the PCI domain. Basic and acidic residues-rich tracts occupy residues Asn-590–Glu-624, Arg-826–Gly-903, Asp-925–Glu-965, Ser-1000–Asn-1019, Arg-1026–Arg-1053, and Asp-1061–Arg-1087. 2 disordered regions span residues Asn-590–Ile-632 and Arg-826–Arg-1140. Gly residues predominate over residues Pro-1091–Asn-1101. Basic and acidic residues predominate over residues Pro-1108 to Asp-1130.

It belongs to the eIF-3 subunit A family. Component of the eukaryotic translation initiation factor 3 (eIF-3) complex. The eIF-3 complex interacts with pix.

Its subcellular location is the cytoplasm. Functionally, RNA-binding component of the eukaryotic translation initiation factor 3 (eIF-3) complex, which is involved in protein synthesis of a specialized repertoire of mRNAs and, together with other initiation factors, stimulates binding of mRNA and methionyl-tRNAi to the 40S ribosome. The eIF-3 complex specifically targets and initiates translation of a subset of mRNAs involved in cell proliferation. In Drosophila willistoni (Fruit fly), this protein is Eukaryotic translation initiation factor 3 subunit A.